We begin with the raw amino-acid sequence, 609 residues long: UvrABC system protein C (609 aa).

The GIY-YIG domain maps to 15–92 (TGSGVYQMQD…IKQFRPRYNV (78 aa)). Residues 202–237 (DQVIIKLTERMEVASENLVFEEAAHYRDQIRQLRRL) form the UVR domain.

Belongs to the UvrC family. As to quaternary structure, interacts with UvrB in an incision complex.

It localises to the cytoplasm. Functionally, the UvrABC repair system catalyzes the recognition and processing of DNA lesions. UvrC both incises the 5' and 3' sides of the lesion. The N-terminal half is responsible for the 3' incision and the C-terminal half is responsible for the 5' incision. This chain is UvrABC system protein C, found in Coxiella burnetii (strain CbuK_Q154) (Coxiella burnetii (strain Q154)).